An 81-amino-acid polypeptide reads, in one-letter code: Photosystem I iron-sulfur center (81 aa).

4Fe-4S ferredoxin-type domains lie at 2–31 (SHSV…MIPW) and 39–68 (IASA…VRVY). [4Fe-4S] cluster-binding residues include cysteine 11, cysteine 14, cysteine 17, cysteine 21, cysteine 48, cysteine 51, cysteine 54, and cysteine 58.

The eukaryotic PSI reaction center is composed of at least 11 subunits. Requires [4Fe-4S] cluster as cofactor.

The protein localises to the plastid. The protein resides in the chloroplast thylakoid membrane. It carries out the reaction reduced [plastocyanin] + hnu + oxidized [2Fe-2S]-[ferredoxin] = oxidized [plastocyanin] + reduced [2Fe-2S]-[ferredoxin]. Apoprotein for the two 4Fe-4S centers FA and FB of photosystem I (PSI); essential for photochemical activity. FB is the terminal electron acceptor of PSI, donating electrons to ferredoxin. The C-terminus interacts with PsaA/B/D and helps assemble the protein into the PSI complex. Required for binding of PsaD and PsaE to PSI. PSI is a plastocyanin-ferredoxin oxidoreductase, converting photonic excitation into a charge separation, which transfers an electron from the donor P700 chlorophyll pair to the spectroscopically characterized acceptors A0, A1, FX, FA and FB in turn. The sequence is that of Photosystem I iron-sulfur center from Vitis vinifera (Grape).